Reading from the N-terminus, the 708-residue chain is Protein MICRORCHIDIA 5 (708 aa).

Positions 1–11 (MAESGSTNPKS) are enriched in polar residues. The tract at residues 1-47 (MAESGSTNPKSPSVVPDSTLGGLKRDLRNYHDGDDSNNLSIKKSKTT) is disordered. The span at 23–34 (LKRDLRNYHDGD) shows a compositional bias: basic and acidic residues. The stretch at 590–665 (SVNLEAELQK…LENRQEGVST (76 aa)) forms a coiled coil. The short motif at 672–679 (ARRDVTED) is the Nuclear localization signal element.

Belongs to the MORC ATPase protein family. Homodimer and heterodimer. Component of an RNA-directed DNA methylation (RdDM) complex. The cofactor is Mg(2+). Mn(2+) is required as a cofactor.

It localises to the nucleus. Exhibits ATPase activity. Binds DNA/RNA in a non-specific manner and exhibits endonuclease activity. Probably involved in DNA repair. Involved in RNA-directed DNA methylation (RdDM) as a component of the RdDM machinery and required for gene silencing. May also be involved in the regulation of chromatin architecture to maintain gene silencing. The protein is Protein MICRORCHIDIA 5 of Arabidopsis thaliana (Mouse-ear cress).